Reading from the N-terminus, the 67-residue chain is Preprofallaxidin-4 (67 aa).

Positions 1–22 (MASLKKFLFLVLFLGMVSLSIC) are cleaved as a signal peptide. A propeptide spanning residues 23–46 (DKEKREGENEEEEEEHEEESEEKR) is cleaved from the precursor. The tract at residues 24 to 48 (KEKREGENEEEEEEHEEESEEKRGL) is disordered. Acidic residues predominate over residues 30–42 (ENEEEEEEHEEES).

This sequence belongs to the frog skin active peptide (FSAP) family. Dermaseptin subfamily. As to expression, expressed by the skin glands.

It is found in the secreted. The protein is Preprofallaxidin-4 of Litoria fallax (Eastern dwarf tree frog).